Here is a 322-residue protein sequence, read N- to C-terminus: Undecaprenyl-phosphate 4-deoxy-4-formamido-L-arabinose transferase (322 aa).

The Cytoplasmic segment spans residues Met-1–Met-235. The helical transmembrane segment at Leu-236–Ile-256 threads the bilayer. The Periplasmic segment spans residues Leu-257–Gly-269. The helical transmembrane segment at Val-270–Leu-290 threads the bilayer. Over Leu-291–Glu-322 the chain is Cytoplasmic.

Belongs to the glycosyltransferase 2 family.

Its subcellular location is the cell inner membrane. It catalyses the reaction UDP-4-deoxy-4-formamido-beta-L-arabinose + di-trans,octa-cis-undecaprenyl phosphate = 4-deoxy-4-formamido-alpha-L-arabinopyranosyl di-trans,octa-cis-undecaprenyl phosphate + UDP. The protein operates within glycolipid biosynthesis; 4-amino-4-deoxy-alpha-L-arabinose undecaprenyl phosphate biosynthesis; 4-amino-4-deoxy-alpha-L-arabinose undecaprenyl phosphate from UDP-4-deoxy-4-formamido-beta-L-arabinose and undecaprenyl phosphate: step 1/2. Its pathway is bacterial outer membrane biogenesis; lipopolysaccharide biosynthesis. Functionally, catalyzes the transfer of 4-deoxy-4-formamido-L-arabinose from UDP to undecaprenyl phosphate. The modified arabinose is attached to lipid A and is required for resistance to polymyxin and cationic antimicrobial peptides. The chain is Undecaprenyl-phosphate 4-deoxy-4-formamido-L-arabinose transferase from Shigella flexneri.